We begin with the raw amino-acid sequence, 122 residues long: Large ribosomal subunit protein uL14 (122 aa).

This sequence belongs to the universal ribosomal protein uL14 family. Part of the 50S ribosomal subunit. Forms a cluster with proteins L3 and L19. In the 70S ribosome, L14 and L19 interact and together make contacts with the 16S rRNA in bridges B5 and B8.

Its function is as follows. Binds to 23S rRNA. Forms part of two intersubunit bridges in the 70S ribosome. The protein is Large ribosomal subunit protein uL14 of Aliarcobacter butzleri (strain RM4018) (Arcobacter butzleri).